Here is a 502-residue protein sequence, read N- to C-terminus: ATP synthase subunit alpha (502 aa).

The interval Val115–Arg139 is disordered. Residue Gly169–Thr176 coordinates ATP.

It belongs to the ATPase alpha/beta chains family. In terms of assembly, F-type ATPases have 2 components, CF(1) - the catalytic core - and CF(0) - the membrane proton channel. CF(1) has five subunits: alpha(3), beta(3), gamma(1), delta(1), epsilon(1). CF(0) has three main subunits: a(1), b(2) and c(9-12). The alpha and beta chains form an alternating ring which encloses part of the gamma chain. CF(1) is attached to CF(0) by a central stalk formed by the gamma and epsilon chains, while a peripheral stalk is formed by the delta and b chains.

It localises to the cell membrane. The enzyme catalyses ATP + H2O + 4 H(+)(in) = ADP + phosphate + 5 H(+)(out). Its function is as follows. Produces ATP from ADP in the presence of a proton gradient across the membrane. The alpha chain is a regulatory subunit. The polypeptide is ATP synthase subunit alpha (Geobacillus thermodenitrificans (strain NG80-2)).